A 514-amino-acid chain; its full sequence is 2-isopropylmalate synthase (514 aa).

In terms of domain architecture, Pyruvate carboxyltransferase spans 5–267 (VIIFDTTLRD…ETNIKHEEIH (263 aa)). 4 residues coordinate Mn(2+): Asp-14, His-202, His-204, and Asn-238. A regulatory domain region spans residues 392 to 514 (KLNYLSVQSG…AEIKERIATV (123 aa)).

It belongs to the alpha-IPM synthase/homocitrate synthase family. LeuA type 1 subfamily. As to quaternary structure, homodimer. Mn(2+) is required as a cofactor.

It localises to the cytoplasm. The catalysed reaction is 3-methyl-2-oxobutanoate + acetyl-CoA + H2O = (2S)-2-isopropylmalate + CoA + H(+). It participates in amino-acid biosynthesis; L-leucine biosynthesis; L-leucine from 3-methyl-2-oxobutanoate: step 1/4. Functionally, catalyzes the condensation of the acetyl group of acetyl-CoA with 3-methyl-2-oxobutanoate (2-ketoisovalerate) to form 3-carboxy-3-hydroxy-4-methylpentanoate (2-isopropylmalate). This Photobacterium profundum (strain SS9) protein is 2-isopropylmalate synthase.